The primary structure comprises 844 residues: Beta-mannosidase B (844 aa).

The active-site Proton donor is E432. N-linked (GlcNAc...) asparagine glycosylation is present at N723.

This sequence belongs to the glycosyl hydrolase 2 family. Beta-mannosidase B subfamily.

The catalysed reaction is Hydrolysis of terminal, non-reducing beta-D-mannose residues in beta-D-mannosides.. The protein operates within glycan metabolism; N-glycan degradation. Functionally, exoglycosidase that cleaves the single beta-linked mannose residue from the non-reducing end of beta-mannosidic oligosaccharides of various complexity and length. Prefers mannobiose over mannotriose and has no activity against polymeric mannan. Is also severely restricted by galactosyl substitutions at the +1 subsite. The chain is Beta-mannosidase B (mndB) from Aspergillus niger (strain ATCC MYA-4892 / CBS 513.88 / FGSC A1513).